The chain runs to 152 residues: MSRFVFILLCFIPHLGRADCWDKAGERYNIPSSLLKAIAEKESGFNKSAVNVNNNGSKDYGIMQINDFHSKRLREMGYSEEMLISHPCLSVHYAAKLLNEFMMMYGRGWEAVGAYNAGTSPKKKKERLKYAEDIYRRYLRIAAESKQNNRRI.

A signal peptide spans 1 to 17 (MSRFVFILLCFIPHLGR).

This sequence belongs to the IagB/IpgF/P19 family.

The sequence is that of Protein IpgF (ipgF) from Shigella flexneri.